Here is a 249-residue protein sequence, read N- to C-terminus: Putative ABC transporter ATP-binding protein GSU1281 (249 aa).

In terms of domain architecture, ABC transporter spans 6–236 (VEVRDLCHCY…DELLATCRLE (231 aa)). 39-46 (GANGAGKS) contacts ATP.

The protein belongs to the ABC transporter superfamily.

It is found in the cell inner membrane. In terms of biological role, probably part of an ABC transporter complex. Responsible for energy coupling to the transport system. The chain is Putative ABC transporter ATP-binding protein GSU1281 from Geobacter sulfurreducens (strain ATCC 51573 / DSM 12127 / PCA).